The following is a 289-amino-acid chain: Ribosomal RNA small subunit methyltransferase A (289 aa).

Residues asparagine 21, leucine 23, glycine 48, glutamate 69, aspartate 94, and asparagine 120 each contribute to the S-adenosyl-L-methionine site.

It belongs to the class I-like SAM-binding methyltransferase superfamily. rRNA adenine N(6)-methyltransferase family. RsmA subfamily.

The protein resides in the cytoplasm. The catalysed reaction is adenosine(1518)/adenosine(1519) in 16S rRNA + 4 S-adenosyl-L-methionine = N(6)-dimethyladenosine(1518)/N(6)-dimethyladenosine(1519) in 16S rRNA + 4 S-adenosyl-L-homocysteine + 4 H(+). Specifically dimethylates two adjacent adenosines (A1518 and A1519) in the loop of a conserved hairpin near the 3'-end of 16S rRNA in the 30S particle. May play a critical role in biogenesis of 30S subunits. This chain is Ribosomal RNA small subunit methyltransferase A, found in Haemophilus ducreyi (strain 35000HP / ATCC 700724).